The primary structure comprises 669 residues: Epithelial sodium channel subunit alpha (669 aa).

The segment at 1–43 (MEGNKLEEQDSSPPQSTPGLMKGNKREEQGLGPEPAAPQQPTA) is disordered. Residues 1 to 85 (MEGNKLEEQD…CSQHNRMKTA (85 aa)) are Cytoplasmic-facing. Positions 33–42 (PEPAAPQQPT) are enriched in low complexity. A helical membrane pass occupies residues 86–106 (FWAVLWLCTFGMMYWQFGLLF). Over 107–562 (GEYFSYPVSL…SQWSLWFGSS (456 aa)) the chain is Extracellular. 10 cysteine pairs are disulfide-bonded: Cys-133-Cys-305, Cys-229-Cys-236, Cys-282-Cys-289, Cys-394-Cys-479, Cys-416-Cys-456, Cys-416-Cys-475, Cys-420-Cys-471, Cys-429-Cys-456, Cys-429-Cys-479, and Cys-431-Cys-445. The segment at 175 to 243 (RSRRDLRGTL…SDCFYQTYSS (69 aa)) is gating release of inhibition by proteolysis (GRIP); protease-sensitive region that is responsible for the proteolytic activation of the channel. The chain crosses the membrane as a helical span at residues 563–583 (VLSVVEMAELVFDLLVIMFLM). Topologically, residues 584–669 (LLRRFRSRYW…SSSTCPLGGP (86 aa)) are cytoplasmic. The segment at 620–669 (HPMSLSLSQPGPAPSPALTAPPPAYATLGPRPSPGGSAGASSSTCPLGGP) is disordered. The segment covering 630 to 643 (GPAPSPALTAPPPA) has biased composition (pro residues). A PY motif; recruits WW domain-containing proteins and is thereby required for ubiquitination and inhibition of the channel by NEDD4 and NEDD4L motif is present at residues 640-644 (PPPAY).

The protein belongs to the amiloride-sensitive sodium channel (TC 1.A.6) family. SCNN1A subfamily. As to quaternary structure, heterotrimer; containing an alpha/SCNN1A, a beta/SCNN1B and a gamma/SCNN1G subunit. Interacts with WWP1 (via WW domains). Interacts with WWP2 (via WW domains); inhibits the channel. Interacts with BPIFA1; the interaction is indirect via SCNN1B and inhibits the proteolytic processing of SCNN1A and SCNN1G and the activation of ENaC. Interacts with the full-length immature form of PCSK9 (pro-PCSK9); inhibits ENaC by promoting its proteasomal degradation. Post-translationally, ubiquitinated. Can be ubiquitinated at multiple sites and undergo monoubiquitination and polyubiquitination. Ubiquitination by NEDD4 or NEDD4L inhibits the ENaC channel through endocytosis, intracellular retention and degradation of its individual subunits. In terms of processing, ENaC is activated through the proteolytic maturation of its subunits. Furin cleaves the SCNN1A subunit, which results in a stepwise increase in the open probability of the channel due to the release of an inhibitory tract. BPIFA1, which is recruited by the SCNN1B subunit, prevents the proteolytic activation of ENaC. N-glycosylated. In terms of tissue distribution, expressed in the female reproductive tract, from the fimbrial end of the fallopian tube to the endometrium (at protein level). Expressed in kidney (at protein level). In the respiratory tract, expressed in the bronchial epithelium (at protein level). Highly expressed in lung. Detected at intermediate levels in pancreas and liver, and at low levels in heart and placenta. in skin, expressed in keratinocytes, melanocytes and Merkel cells of the epidermal sub-layers, stratum basale, stratum spinosum and stratum granulosum (at protein level). Expressed in the outer root sheath of the hair follicles (at protein level). Detected in both peripheral and central cells of the sebaceous gland (at protein level). Expressed by eccrine sweat glands (at protein level). In skin, also expressed by arrector pili muscle cells and intradermal adipocytes. Isoform 1 and isoform 2 predominate in all tissues. Detected in lung and heart.

Its subcellular location is the apical cell membrane. The protein localises to the cell projection. It is found in the cilium. It localises to the cytoplasmic granule. The protein resides in the cytoplasm. Its subcellular location is the cytoplasmic vesicle. The protein localises to the secretory vesicle. It is found in the acrosome. It localises to the flagellum. The enzyme catalyses Na(+)(in) = Na(+)(out). With respect to regulation, originally identified and characterized by its inhibition by the diuretic drug amiloride. Inhibited by phenamil. Its function is as follows. This is one of the three pore-forming subunits of the heterotrimeric epithelial sodium channel (ENaC), a critical regulator of sodium balance and fluid homeostasis. ENaC operates in epithelial tissues, where it mediates the electrodiffusion of sodium ions from extracellular fluid through the apical membrane of cells, with water following osmotically. It plays a key role in maintaining sodium homeostasis through electrogenic sodium reabsorption in the kidneys. Additionally, ENaC is essential for airway surface liquid homeostasis, which is crucial for proper mucus clearance. Not functional. The sequence is that of Epithelial sodium channel subunit alpha from Homo sapiens (Human).